The following is a 174-amino-acid chain: MSLNKVILIGRLGRDPEVRYMPNGEAVCNFSVATSETWNDRNGQRVERTEWHNITMYRKLAEIAGQYLKKGGLVYLEGRIQSRKYQGKDGIERTAYDIVANEMKMLGGRNENSGGAPYEEGYGQSQEAYQRPAQQSRQPASDAPSHPQEAPAAPRRQPVPAAAPVEDIDDDIPF.

Positions L3 to G107 constitute an SSB domain. The interval G108–F174 is disordered. Residues G123–P139 show a composition bias toward polar residues. Low complexity predominate over residues P147–V165. The short motif at D169–F174 is the Important for interaction with partner proteins element.

As to quaternary structure, homotetramer.

Plays an important role in DNA replication, recombination and repair. Binds to ssDNA and to an array of partner proteins to recruit them to their sites of action during DNA metabolism. The protein is Single-stranded DNA-binding protein (ssb) of Neisseria meningitidis serogroup A / serotype 4A (strain DSM 15465 / Z2491).